The chain runs to 601 residues: Molybdenum cofactor synthesis protein cinnamon (601 aa).

The interval 3 to 153 (SITFGVLTIS…TISALLPHAV (151 aa)) is MPT adenylyltransferase. The segment at 173 to 195 (SAQKSHICPHKTGTGTDSDRNSP) is disordered. Residues 184 to 596 (TGTGTDSDRN…FPASVLRFDF (413 aa)) are MPT Mo-transferase. At Ser-376 the chain carries Phosphoserine.

The protein in the N-terminal section; belongs to the MoaB/Mog family. It in the C-terminal section; belongs to the MoeA family. The cofactor is Mg(2+).

It carries out the reaction molybdopterin + ATP + H(+) = adenylyl-molybdopterin + diphosphate. It catalyses the reaction adenylyl-molybdopterin + molybdate = Mo-molybdopterin + AMP + H(+). Its pathway is cofactor biosynthesis; molybdopterin biosynthesis. Catalyzes two steps in the biosynthesis of the molybdenum cofactor. In the first step, molybdopterin is adenylated. Subsequently, molybdate is inserted into adenylated molybdopterin and AMP is released. This is Molybdenum cofactor synthesis protein cinnamon (cin) from Drosophila melanogaster (Fruit fly).